The primary structure comprises 460 residues: UDP-N-acetylmuramoylalanine--D-glutamate ligase (460 aa).

120–126 (GSNGKTT) is an ATP binding site.

This sequence belongs to the MurCDEF family.

It is found in the cytoplasm. The catalysed reaction is UDP-N-acetyl-alpha-D-muramoyl-L-alanine + D-glutamate + ATP = UDP-N-acetyl-alpha-D-muramoyl-L-alanyl-D-glutamate + ADP + phosphate + H(+). It participates in cell wall biogenesis; peptidoglycan biosynthesis. In terms of biological role, cell wall formation. Catalyzes the addition of glutamate to the nucleotide precursor UDP-N-acetylmuramoyl-L-alanine (UMA). In Lactobacillus delbrueckii subsp. bulgaricus (strain ATCC BAA-365 / Lb-18), this protein is UDP-N-acetylmuramoylalanine--D-glutamate ligase.